We begin with the raw amino-acid sequence, 129 residues long: Large-conductance mechanosensitive channel (129 aa).

3 helical membrane-spanning segments follow: residues 8–28, 30–50, and 67–87; these read FAFR…AAFS, IIKS…IGGI, and GQFL…FLFV.

It belongs to the MscL family. In terms of assembly, homopentamer.

The protein localises to the cell membrane. In terms of biological role, channel that opens in response to stretch forces in the membrane lipid bilayer. May participate in the regulation of osmotic pressure changes within the cell. In Exiguobacterium sibiricum (strain DSM 17290 / CCUG 55495 / CIP 109462 / JCM 13490 / 255-15), this protein is Large-conductance mechanosensitive channel.